We begin with the raw amino-acid sequence, 126 residues long: Holo-[acyl-carrier-protein] synthase (126 aa).

Residues Asp9 and Glu58 each contribute to the Mg(2+) site.

The protein belongs to the P-Pant transferase superfamily. AcpS family. It depends on Mg(2+) as a cofactor.

It localises to the cytoplasm. It catalyses the reaction apo-[ACP] + CoA = holo-[ACP] + adenosine 3',5'-bisphosphate + H(+). Functionally, transfers the 4'-phosphopantetheine moiety from coenzyme A to a Ser of acyl-carrier-protein. The polypeptide is Holo-[acyl-carrier-protein] synthase (Vibrio campbellii (strain ATCC BAA-1116)).